A 131-amino-acid polypeptide reads, in one-letter code: Ribonuclease P protein component (131 aa).

It belongs to the RnpA family. In terms of assembly, consists of a catalytic RNA component (M1 or rnpB) and a protein subunit.

It carries out the reaction Endonucleolytic cleavage of RNA, removing 5'-extranucleotides from tRNA precursor.. RNaseP catalyzes the removal of the 5'-leader sequence from pre-tRNA to produce the mature 5'-terminus. It can also cleave other RNA substrates such as 4.5S RNA. The protein component plays an auxiliary but essential role in vivo by binding to the 5'-leader sequence and broadening the substrate specificity of the ribozyme. The polypeptide is Ribonuclease P protein component (Synechococcus sp. (strain WH7803)).